The following is a 1169-amino-acid chain: RecBCD enzyme subunit RecB (1169 aa).

Residues 1–436 form the UvrD-like helicase ATP-binding domain; sequence MNKILEKIQN…IVLKINHRSS (436 aa). The interval 1–839 is DNA-binding and helicase activity, interacts with RecC; sequence MNKILEKIQN…LLEIAKIFTI (839 aa). Residue 18 to 25 participates in ATP binding; sequence ASAGTGKT. The region spanning 459-746 is the UvrD-like helicase C-terminal domain; it reads IEKIDFTNSL…ELMTIHKSKG (288 aa). The segment at 883–1169 is nuclease activity, interacts with RecD and RecA; sequence KEYTSSFSSL…ILELGIKRHL (287 aa). Residues histidine 939, aspartate 1052, and aspartate 1065 each contribute to the Mg(2+) site. Aspartate 1065 serves as the catalytic For nuclease activity.

It belongs to the helicase family. UvrD subfamily. As to quaternary structure, heterotrimer of RecB, RecC and RecD. All subunits contribute to DNA-binding. Interacts with RecA. It depends on Mg(2+) as a cofactor.

The enzyme catalyses Exonucleolytic cleavage (in the presence of ATP) in either 5'- to 3'- or 3'- to 5'-direction to yield 5'-phosphooligonucleotides.. It catalyses the reaction Couples ATP hydrolysis with the unwinding of duplex DNA by translocating in the 3'-5' direction.. It carries out the reaction ATP + H2O = ADP + phosphate + H(+). A helicase/nuclease that prepares dsDNA breaks (DSB) for recombinational DNA repair. Binds to DSBs and unwinds DNA via a highly rapid and processive ATP-dependent bidirectional helicase activity. Unwinds dsDNA until it encounters a Chi (crossover hotspot instigator) sequence from the 3' direction. Cuts ssDNA a few nucleotides 3' to the Chi site. The properties and activities of the enzyme are changed at Chi. The Chi-altered holoenzyme produces a long 3'-ssDNA overhang and facilitates RecA-binding to the ssDNA for homologous DNA recombination and repair. Holoenzyme degrades any linearized DNA that is unable to undergo homologous recombination. In the holoenzyme this subunit contributes ATPase, 3'-5' helicase, exonuclease activity and loads RecA onto ssDNA. This is RecBCD enzyme subunit RecB from Borreliella burgdorferi (strain ATCC 35210 / DSM 4680 / CIP 102532 / B31) (Borrelia burgdorferi).